A 407-amino-acid polypeptide reads, in one-letter code: Argininosuccinate synthase (407 aa).

ATP is bound by residues 12 to 20 (AYSGGLDTS) and Ala-39. L-citrulline contacts are provided by Tyr-92 and Ser-97. Residue Gly-122 coordinates ATP. Positions 124, 128, and 129 each coordinate L-aspartate. Asn-128 lines the L-citrulline pocket. L-citrulline contacts are provided by Arg-132, Ser-182, Ser-191, Glu-267, and Tyr-279.

The protein belongs to the argininosuccinate synthase family. Type 1 subfamily. Homotetramer.

It localises to the cytoplasm. The enzyme catalyses L-citrulline + L-aspartate + ATP = 2-(N(omega)-L-arginino)succinate + AMP + diphosphate + H(+). Its pathway is amino-acid biosynthesis; L-arginine biosynthesis; L-arginine from L-ornithine and carbamoyl phosphate: step 2/3. This chain is Argininosuccinate synthase, found in Campylobacter fetus subsp. fetus (strain 82-40).